Consider the following 167-residue polypeptide: Lipoprotein signal peptidase (167 aa).

Transmembrane regions (helical) follow at residues Phe8–Met28, Phe61–Trp81, and Phe93–Tyr113. Catalysis depends on residues Asp117 and Asp136. Residues Ile126–Ile146 traverse the membrane as a helical segment.

This sequence belongs to the peptidase A8 family.

Its subcellular location is the cell inner membrane. It carries out the reaction Release of signal peptides from bacterial membrane prolipoproteins. Hydrolyzes -Xaa-Yaa-Zaa-|-(S,diacylglyceryl)Cys-, in which Xaa is hydrophobic (preferably Leu), and Yaa (Ala or Ser) and Zaa (Gly or Ala) have small, neutral side chains.. It functions in the pathway protein modification; lipoprotein biosynthesis (signal peptide cleavage). Its function is as follows. This protein specifically catalyzes the removal of signal peptides from prolipoproteins. The protein is Lipoprotein signal peptidase of Bartonella quintana (strain Toulouse) (Rochalimaea quintana).